The following is a 188-amino-acid chain: Viral FLICE protein (188 aa).

DED domains are found at residues Ala2 to His74 and Pro93 to Thr169.

In terms of assembly, interacts with host RIPK1, TRAF2, MAP3K14, IKBKB, and IKBKG. Interacts with host CADM1; this interaction is essential for chronic NF-kappa-B activation.

Functionally, plays a role in the modulation of host signaling pathways by acting as an activator of both the classic and the alternative NF-kappa-B pathways. Thereby, initiates an important range of cellular processes to promote cell survival, proliferation and protection from apoptosis. This Human herpesvirus 8 type P (isolate GK18) (HHV-8) protein is Viral FLICE protein (ORF71).